The sequence spans 428 residues: AP-1 complex subunit mu-2 (428 aa).

The region spanning 170-426 (KNEVFLDVIE…ITMAGEYELR (257 aa)) is the MHD domain.

This sequence belongs to the adaptor complexes medium subunit family. As to quaternary structure, adaptor protein complex 1 (AP-1) is a heterotetramer composed of two large adaptins (gamma-type subunit and beta-type subunit), a medium adaptin (mu-type subunit) and a small adaptin (sigma-type subunit). As to expression, ubiquitous.

The protein resides in the golgi apparatus. The protein localises to the trans-Golgi network membrane. Its subcellular location is the early endosome membrane. It is found in the cytoplasmic vesicle. It localises to the clathrin-coated vesicle membrane. Subunit of clathrin-associated adaptor protein complex 1 that plays a role in protein sorting at the trans-Golgi network and early endosomes (TGN/EE). The AP complexes mediate the recruitment of clathrin to membranes and the recognition of sorting signals within the cytosolic tails of transmembrane cargo molecules. Required for KNOLLE localization at the cell plate to mediate cytokinesis. Functions redundantly with AP1M1 in multiple post-Golgi trafficking pathways leading from the TGN to the vacuole, the plasma membrane, and the cell-division plane. The polypeptide is AP-1 complex subunit mu-2 (AP1M2) (Arabidopsis thaliana (Mouse-ear cress)).